Reading from the N-terminus, the 41-residue chain is U-AITX-Bg1a (41 aa).

Disulfide bonds link Cys2-Cys35, Cys4-Cys28, and Cys18-Cys36.

It belongs to the sea anemone type 3 (BDS) potassium channel toxin family.

Its subcellular location is the secreted. It localises to the nematocyst. Potently and selectively inhibits voltage-gated potassium channels Kv11/KCNH/ERG. Acts as a gating-modifier toxin that shifts the voltage-dependence of ERG activation in the positive direction and suppresses its current amplitudes elicited by strong depolarizing pulses that maximally activate the channels. The polypeptide is U-AITX-Bg1a (Bunodosoma granuliferum (Red warty sea anemone)).